Consider the following 469-residue polypeptide: Properdin (469 aa).

The signal sequence occupies residues 1-27 (MITEGAQAPRLLLPPLLLLLTLPATGS). 7 consecutive TSP type-1 domains span residues 28-76 (DPVL…QPCR), 77-134 (SPRW…QCCP), 136-191 (MGGW…QSCP), 193-255 (HGAW…PPCP), 257-313 (AGSW…VPCP), 315-377 (DGEW…QHCP), and 379-462 (KGSW…PACK). Disulfide bonds link cysteine 32-cysteine 56, cysteine 43-cysteine 72, and cysteine 57-cysteine 75. Residues tryptophan 83 and tryptophan 86 are each glycosylated (C-linked (Man) tryptophan). 7 disulfides stabilise this stretch: cysteine 89–cysteine 127, cysteine 93–cysteine 133, cysteine 104–cysteine 111, cysteine 132–cysteine 170, cysteine 148–cysteine 184, cysteine 152–cysteine 190, and cysteine 163–cysteine 174. Residues tryptophan 139, tryptophan 142, and tryptophan 145 are each glycosylated (C-linked (Man) tryptophan). O-linked (Fuc...) threonine glycosylation is present at threonine 151. C-linked (Man) tryptophan glycans are attached at residues tryptophan 196, tryptophan 199, and tryptophan 202. 3 cysteine pairs are disulfide-bonded: cysteine 205/cysteine 248, cysteine 209/cysteine 254, and cysteine 224/cysteine 238. O-linked (Fuc...) serine glycosylation occurs at serine 208. The segment at 218-238 (ETRSRKCSAPEPSQKPPGKPC) is disordered. Residues tryptophan 260 and tryptophan 263 are each glycosylated (C-linked (Man) tryptophan). 3 cysteine pairs are disulfide-bonded: cysteine 269–cysteine 306, cysteine 273–cysteine 312, and cysteine 284–cysteine 296. O-linked (Fuc...) threonine glycosylation is present at threonine 272. C-linked (Man) tryptophan glycans are attached at residues tryptophan 321 and tryptophan 324. Intrachain disulfides connect cysteine 327–cysteine 370, cysteine 337–cysteine 376, and cysteine 350–cysteine 360. An interaction with Complement C3 beta chain region spans residues 351 to 359 (KGRKFDGHR). C-linked (Man) tryptophan glycans are attached at residues tryptophan 382, tryptophan 385, and tryptophan 388. Disulfide bonds link cysteine 391/cysteine 455, cysteine 395/cysteine 461, and cysteine 407/cysteine 439. N-linked (GlcNAc...) asparagine glycosylation occurs at asparagine 428.

In plasma, properdin exists as dimers, trimers or tetramers in the relative proportions of 26:54:20. Interacts with the pro-C3-convertase enzyme complex (C3b-Bb) comprised of Complement C3 beta chain (C3b) and the Complement factor B Bb fragment (Bb), where it binds (via its TSP type-1 5 domain) with C3b and Bb. This interaction stabilizes the complex and allows it to become the active C3-convertase enzyme complex (C3b-Bb-FP). Interacts with C3b. Interacts with CFB.

The protein localises to the secreted. A positive regulator of the alternate pathway of complement. It binds to and stabilizes the C3- and C5-convertase enzyme complexes. Inhibits CFI-CFH mediated degradation of Inhibits CFI-CFH mediated degradation of Complement C3 beta chain (C3b). This is Properdin (CFP) from Pongo abelii (Sumatran orangutan).